The chain runs to 91 residues: Large ribosomal subunit protein bL28 (91 aa).

This sequence belongs to the bacterial ribosomal protein bL28 family.

This is Large ribosomal subunit protein bL28 from Protochlamydia amoebophila (strain UWE25).